The sequence spans 365 residues: BTB/POZ and TAZ domain-containing protein 1 (365 aa).

In terms of domain architecture, BTB spans 25–96 (TDVEIITSGR…LYSPSVTENE (72 aa)). Residues 193-202 (RKKRRRRHRR) carry the Nuclear localization signal motif. The TAZ-type zinc-finger motif lies at 205-304 (NLYLQLSEAM…SESCRVPLCR (100 aa)). Residues 315-338 (KMVEDTKWKVLVRRVASAKAMSSL) form a caM-binding region.

In terms of assembly, interacts with CUL3A. Interacts with GTE9/BET9 and GTE11/BET10 through the BTB domain. In terms of tissue distribution, preferentially expressed in young leaves, roots and stems.

It is found in the nucleus. The protein localises to the cytoplasm. The protein operates within protein modification; protein ubiquitination. Functionally, may act as a substrate-specific adapter of an E3 ubiquitin-protein ligase complex (CUL3-RBX1-BTB) which mediates the ubiquitination and subsequent proteasomal degradation of target proteins. Also targeted for degradation by the 26S proteasome pathway. May be involved in gametophyte development. This chain is BTB/POZ and TAZ domain-containing protein 1 (BT1), found in Arabidopsis thaliana (Mouse-ear cress).